We begin with the raw amino-acid sequence, 89 residues long: Putative defensin-like protein 254 (89 aa).

The N-terminal stretch at 1–20 (MHNISFKLLLLCDLFLSSSS) is a signal peptide. 2 cysteine pairs are disulfide-bonded: Cys-31/Cys-48 and Cys-37/Cys-55.

This sequence belongs to the DEFL family.

The protein localises to the secreted. The chain is Putative defensin-like protein 254 from Arabidopsis thaliana (Mouse-ear cress).